A 586-amino-acid chain; its full sequence is Inner membrane protein YejM (586 aa).

Residues 1–20 (MVTHRQRYREKVSQMVSWGH) lie on the Cytoplasmic side of the membrane. The chain crosses the membrane as a helical span at residues 21–43 (WFALFNILLSLVIGSRYLFIADW). At 44–57 (PTTLAGRIYSYVSI) the chain is on the periplasmic side. The helical transmembrane segment at 58 to 80 (IGHFSFLVFATYLLILFPLTFIV) threads the bilayer. Topologically, residues 81–84 (GSQR) are cytoplasmic. Residues 85-103 (LMRFLSVILATAGMTLLLI) traverse the membrane as a helical segment. Residues 104–134 (DSEVFTRFHLHLNPIVWQLVINPDENEMARD) lie on the Periplasmic side of the membrane. A helical membrane pass occupies residues 135–157 (WQLMFISVPVILLLELVFATWSW). Topologically, residues 158–168 (QKLRSLTRRRR) are cytoplasmic. Residues 169-191 (FARPLAAFLFIAFIASHVVYIWA) form a helical membrane-spanning segment. Residues 192 to 586 (DANFYRPITM…LTDEKRFIAN (395 aa)) lie on the Periplasmic side of the membrane.

The protein to H.influenzae HI_0842.

The protein resides in the cell inner membrane. This chain is Inner membrane protein YejM (yejM), found in Escherichia coli O157:H7.